A 365-amino-acid polypeptide reads, in one-letter code: Peptide chain release factor 2 (365 aa).

At glutamine 251 the chain carries N5-methylglutamine.

It belongs to the prokaryotic/mitochondrial release factor family. Methylated by PrmC. Methylation increases the termination efficiency of RF2.

The protein resides in the cytoplasm. Its function is as follows. Peptide chain release factor 2 directs the termination of translation in response to the peptide chain termination codons UGA and UAA. The protein is Peptide chain release factor 2 of Campylobacter jejuni subsp. jejuni serotype O:6 (strain 81116 / NCTC 11828).